A 247-amino-acid chain; its full sequence is Exosome complex component Rrp4 (247 aa).

The 74-residue stretch at 75-148 (DDLVIGIVEN…RDPVITVKGK (74 aa)) folds into the S1 motif domain. The region spanning 154–220 (TEGVVVDVKP…QAIKLIELKA (67 aa)) is the KH domain.

This sequence belongs to the RRP4 family. Component of the archaeal exosome complex. Forms a trimer of Rrp4 and/or Csl4 subunits. The trimer associates with a hexameric ring-like arrangement composed of 3 Rrp41-Rrp42 heterodimers.

It is found in the cytoplasm. Its function is as follows. Non-catalytic component of the exosome, which is a complex involved in RNA degradation. Increases the RNA binding and the efficiency of RNA degradation. Confers strong poly(A) specificity to the exosome. The polypeptide is Exosome complex component Rrp4 (Thermosphaera aggregans (strain DSM 11486 / M11TL)).